Here is a 440-residue protein sequence, read N- to C-terminus: Glutamate-1-semialdehyde 2,1-aminomutase (440 aa).

N6-(pyridoxal phosphate)lysine is present on Lys271.

Belongs to the class-III pyridoxal-phosphate-dependent aminotransferase family. HemL subfamily. As to quaternary structure, homodimer. The cofactor is pyridoxal 5'-phosphate.

The protein localises to the cytoplasm. It carries out the reaction (S)-4-amino-5-oxopentanoate = 5-aminolevulinate. It functions in the pathway porphyrin-containing compound metabolism; protoporphyrin-IX biosynthesis; 5-aminolevulinate from L-glutamyl-tRNA(Glu): step 2/2. This chain is Glutamate-1-semialdehyde 2,1-aminomutase, found in Chlamydia pneumoniae (Chlamydophila pneumoniae).